The primary structure comprises 92 residues: Small ribosomal subunit protein uS19 (92 aa).

Belongs to the universal ribosomal protein uS19 family.

In terms of biological role, protein S19 forms a complex with S13 that binds strongly to the 16S ribosomal RNA. This chain is Small ribosomal subunit protein uS19, found in Thermosynechococcus vestitus (strain NIES-2133 / IAM M-273 / BP-1).